The chain runs to 435 residues: UPF0053 protein Rv2366c (435 aa).

Residues 1-185 (MTGYYQLLGS…QQRGVVAADE (185 aa)) form the CNNM transmembrane domain. 2 consecutive transmembrane segments (helical) span residues 7 to 27 (LLGS…DAAI) and 89 to 109 (VWGL…VVGV). CBS domains follow at residues 204–267 (MVPR…GRET) and 272–329 (VMRP…IADE).

Belongs to the UPF0053 family.

It localises to the cell membrane. This is UPF0053 protein Rv2366c from Mycobacterium tuberculosis (strain ATCC 25618 / H37Rv).